The sequence spans 338 residues: N-acetylmuramate/N-acetylglucosamine kinase (338 aa).

This sequence belongs to the kinase AmgK family.

It carries out the reaction N-acetyl-D-muramate + ATP = N-acetyl-alpha-D-muramate 1-phosphate + ADP + H(+). It catalyses the reaction N-acetyl-D-glucosamine + ATP = N-acetyl-alpha-D-glucosamine 1-phosphate + ADP + H(+). It functions in the pathway cell wall biogenesis; peptidoglycan recycling. Its function is as follows. Sugar kinase that catalyzes the ATP-dependent phosphorylation of N-acetylmuramate (MurNAc) and N-acetylglucosamine (GlcNAc) at its C1 hydroxyl group, leading to MurNAc alpha-1P and GlcNAc alpha-1P, respectively. Is involved in peptidoglycan recycling as part of a cell wall recycling pathway that bypasses de novo biosynthesis of the peptidoglycan precursor UDP-MurNAc. Plays a role in intrinsic resistance to fosfomycin, which targets the de novo synthesis of UDP-MurNAc. This chain is N-acetylmuramate/N-acetylglucosamine kinase, found in Pseudomonas aeruginosa (strain ATCC 15692 / DSM 22644 / CIP 104116 / JCM 14847 / LMG 12228 / 1C / PRS 101 / PAO1).